We begin with the raw amino-acid sequence, 354 residues long: Fructose-bisphosphate aldolase (354 aa).

Residue S50 participates in D-glyceraldehyde 3-phosphate binding. The active-site Proton donor is D83. 4 residues coordinate Zn(2+): H84, D105, E142, and H198. G199 lines the dihydroxyacetone phosphate pocket. H232 is a binding site for Zn(2+). Dihydroxyacetone phosphate contacts are provided by residues 233–235 (GSS) and 275–278 (NIDT).

This sequence belongs to the class II fructose-bisphosphate aldolase family. Zn(2+) is required as a cofactor.

It catalyses the reaction beta-D-fructose 1,6-bisphosphate = D-glyceraldehyde 3-phosphate + dihydroxyacetone phosphate. It participates in carbohydrate degradation; glycolysis; D-glyceraldehyde 3-phosphate and glycerone phosphate from D-glucose: step 4/4. In terms of biological role, catalyzes the aldol condensation of dihydroxyacetone phosphate (DHAP or glycerone-phosphate) with glyceraldehyde 3-phosphate (G3P) to form fructose 1,6-bisphosphate (FBP) in gluconeogenesis and the reverse reaction in glycolysis. In Stutzerimonas stutzeri (Pseudomonas stutzeri), this protein is Fructose-bisphosphate aldolase (fba).